A 309-amino-acid chain; its full sequence is Thiamine-monophosphate kinase (309 aa).

4 residues coordinate Mg(2+): Asp25, Thr39, Ser40, and Asp41. A substrate-binding site is contributed by Asp48. Residues Asp69 and Asp117 each contribute to the Mg(2+) site. ATP-binding positions include 116–117 (GD) and Arg140. Asp201 serves as a coordination point for Mg(2+). Ser203 provides a ligand contact to ATP. Asp204 provides a ligand contact to Mg(2+). Substrate-binding residues include Glu250 and Trp298.

The protein belongs to the thiamine-monophosphate kinase family.

The catalysed reaction is thiamine phosphate + ATP = thiamine diphosphate + ADP. The protein operates within cofactor biosynthesis; thiamine diphosphate biosynthesis; thiamine diphosphate from thiamine phosphate: step 1/1. Its function is as follows. Catalyzes the ATP-dependent phosphorylation of thiamine-monophosphate (TMP) to form thiamine-pyrophosphate (TPP), the active form of vitamin B1. The chain is Thiamine-monophosphate kinase from Pyrococcus horikoshii (strain ATCC 700860 / DSM 12428 / JCM 9974 / NBRC 100139 / OT-3).